Reading from the N-terminus, the 104-residue chain is Large ribosomal subunit protein uL24 (104 aa).

This sequence belongs to the universal ribosomal protein uL24 family. As to quaternary structure, part of the 50S ribosomal subunit.

Functionally, one of two assembly initiator proteins, it binds directly to the 5'-end of the 23S rRNA, where it nucleates assembly of the 50S subunit. In terms of biological role, one of the proteins that surrounds the polypeptide exit tunnel on the outside of the subunit. This Pseudomonas syringae pv. syringae (strain B728a) protein is Large ribosomal subunit protein uL24.